Reading from the N-terminus, the 185-residue chain is UPF0669 protein C6orf120 homolog (185 aa).

An N-terminal signal peptide occupies residues 1–23; that stretch reads MATPWRCALLMILASQVVILVKC. Residue N47 is glycosylated (N-linked (GlcNAc...) asparagine).

Belongs to the UPF0669 family.

Its subcellular location is the secreted. Its function is as follows. May be involved in induction of apoptosis in CD4(+) T-cells, but not CD8(+) T-cells or hepatocytes. The chain is UPF0669 protein C6orf120 homolog from Rattus norvegicus (Rat).